Here is an 83-residue protein sequence, read N- to C-terminus: Apolipoprotein C-I, basic form (83 aa).

The first 26 residues, 1-26 (MRLFLSLPVLVVVLSMVLEGPAPAQG), serve as a signal peptide directing secretion.

Belongs to the apolipoprotein C1 family.

The protein resides in the secreted. Functionally, inhibitor of lipoprotein binding to the low density lipoprotein (LDL) receptor, LDL receptor-related protein, and very low density lipoprotein (VLDL) receptor. Associates with high density lipoproteins (HDL) and the triacylglycerol-rich lipoproteins in the plasma and makes up about 10% of the protein of the VLDL and 2% of that of HDL. Appears to interfere directly with fatty acid uptake and is also the major plasma inhibitor of cholesteryl ester transfer protein (CETP). Binds free fatty acids and reduces their intracellular esterification. Modulates the interaction of APOE with beta-migrating VLDL and inhibits binding of beta-VLDL to the LDL receptor-related protein. In Cercocebus atys (Sooty mangabey), this protein is Apolipoprotein C-I, basic form (APOC1B).